Here is a 229-residue protein sequence, read N- to C-terminus: Golgi to ER traffic protein 1 (229 aa).

Over 1–14 the chain is Lumenal; the sequence is MGILAALDLHPYTL. The chain crosses the membrane as a helical span at residues 15 to 34; it reads VVSSFTVLLIQQLVGFIGKS. Topologically, residues 35–122 are cytoplasmic; it reads TIQEFAWLFY…KINSLVGVVL (88 aa). A coiled-coil region spans residues 60–117; it reads HTKKQEELHKLNREKRSISAQDEYAKWTKLNRQAEKLTAEVKSLSDDIAKDKSKINSL. A helical transmembrane segment spans residues 123 to 143; the sequence is LFLTTLPLWVFRLWFRKSVLF. Residues 144–167 lie on the Lumenal side of the membrane; the sequence is YLPTGVFPYYVERVLAIPFFASGS. Residues 168 to 184 form a helical membrane-spanning segment; that stretch reads VGLTVWMFAVNNVISSV. The Cytoplasmic portion of the chain corresponds to 185–229; that stretch reads LFLLTFPFKPSVPIPIRQTKVEEVVPESAESKESSPEVIDIADAN. The segment covering 210–219 has biased composition (basic and acidic residues); the sequence is PESAESKESS. The segment at 210–229 is disordered; the sequence is PESAESKESSPEVIDIADAN.

It belongs to the WRB/GET1 family. In terms of assembly, component of the Golgi to ER traffic (GET) complex, which is composed of GET1, GET2 and GET3. Within the complex, GET1 and GET2 form a heterotetramer which is stabilized by phosphatidylinositol binding and which binds to the GET3 homodimer.

It localises to the endoplasmic reticulum membrane. It is found in the golgi apparatus membrane. Its function is as follows. Required for the post-translational delivery of tail-anchored (TA) proteins to the endoplasmic reticulum. Together with GET2, acts as a membrane receptor for soluble GET3, which recognizes and selectively binds the transmembrane domain of TA proteins in the cytosol. The GET complex cooperates with the HDEL receptor ERD2 to mediate the ATP-dependent retrieval of resident ER proteins that contain a C-terminal H-D-E-L retention signal from the Golgi to the ER. In Scheffersomyces stipitis (strain ATCC 58785 / CBS 6054 / NBRC 10063 / NRRL Y-11545) (Yeast), this protein is Golgi to ER traffic protein 1.